Reading from the N-terminus, the 317-residue chain is MEPRYPFVAVDVPEPEADEIGALLFELGASGVEQRDEQTLVRGARSGQVTLVASFEDHGEAMEAIAALGEQSPPLAARLEEVVGDAWRDAWKEHFAPFALTPTITVVPPWAERAPEREGERVLLLEPGRAFGTGLHATTALVAELLDEHAAELRGREILDVGTGSGILALVALLLGAERAVAIDNDEDVIEVVLENAARNGLEGRIEASAGVVEAVTRRFPWVVANIEARVLRPLAPELARVLEPGGWLILSGILESERDDLIARYTSLPRPLEHVATRPDPASPGGDRRAGRGDAGGEGWVAILFRAPGGAASSPG.

S-adenosyl-L-methionine-binding residues include T139, G162, D184, and N226. The disordered stretch occupies residues 274–297; sequence EHVATRPDPASPGGDRRAGRGDAG.

Belongs to the methyltransferase superfamily. PrmA family.

Its subcellular location is the cytoplasm. It catalyses the reaction L-lysyl-[protein] + 3 S-adenosyl-L-methionine = N(6),N(6),N(6)-trimethyl-L-lysyl-[protein] + 3 S-adenosyl-L-homocysteine + 3 H(+). Functionally, methylates ribosomal protein L11. In Sorangium cellulosum (strain So ce56) (Polyangium cellulosum (strain So ce56)), this protein is Ribosomal protein L11 methyltransferase.